Consider the following 394-residue polypeptide: Elongation factor Tu (394 aa).

Residues 10 to 204 (KPHVNIGTIG…AVDSYIPQPV (195 aa)) form the tr-type G domain. A G1 region spans residues 19–26 (GHVDHGKT). 19-26 (GHVDHGKT) contacts GTP. Residue Thr-26 participates in Mg(2+) binding. Residues 60–64 (GITIS) are G2. The tract at residues 81-84 (DCPG) is G3. Residues 81–85 (DCPGH) and 136–139 (NKID) contribute to the GTP site. Residues 136–139 (NKID) form a G4 region. Residues 174–176 (SAL) form a G5 region.

It belongs to the TRAFAC class translation factor GTPase superfamily. Classic translation factor GTPase family. EF-Tu/EF-1A subfamily. As to quaternary structure, monomer.

Its subcellular location is the cytoplasm. It catalyses the reaction GTP + H2O = GDP + phosphate + H(+). GTP hydrolase that promotes the GTP-dependent binding of aminoacyl-tRNA to the A-site of ribosomes during protein biosynthesis. The sequence is that of Elongation factor Tu from Rickettsia rickettsii.